Consider the following 236-residue polypeptide: Biosynthetic peptidoglycan transglycosylase (236 aa).

Residues 12–31 traverse the membrane as a helical segment; sequence ALLWFVAGSIVLVLVFRWVP.

It belongs to the glycosyltransferase 51 family.

Its subcellular location is the cell inner membrane. The enzyme catalyses [GlcNAc-(1-&gt;4)-Mur2Ac(oyl-L-Ala-gamma-D-Glu-L-Lys-D-Ala-D-Ala)](n)-di-trans,octa-cis-undecaprenyl diphosphate + beta-D-GlcNAc-(1-&gt;4)-Mur2Ac(oyl-L-Ala-gamma-D-Glu-L-Lys-D-Ala-D-Ala)-di-trans,octa-cis-undecaprenyl diphosphate = [GlcNAc-(1-&gt;4)-Mur2Ac(oyl-L-Ala-gamma-D-Glu-L-Lys-D-Ala-D-Ala)](n+1)-di-trans,octa-cis-undecaprenyl diphosphate + di-trans,octa-cis-undecaprenyl diphosphate + H(+). Its pathway is cell wall biogenesis; peptidoglycan biosynthesis. Its function is as follows. Peptidoglycan polymerase that catalyzes glycan chain elongation from lipid-linked precursors. In Pseudomonas putida (strain ATCC 700007 / DSM 6899 / JCM 31910 / BCRC 17059 / LMG 24140 / F1), this protein is Biosynthetic peptidoglycan transglycosylase.